Consider the following 400-residue polypeptide: ATP-dependent RNA helicase fal-1 (400 aa).

The Q motif motif lies at 26-54 (PTFESMSLKESLLRGIYAYGYESPSAVQS). A Helicase ATP-binding domain is found at 57–227 (IVQICKGRDT…TKFMTDPVRI (171 aa)). 70-77 (AQSGTGKT) is an ATP binding site. A DEAD box motif is present at residues 175–178 (DEAD). The region spanning 238 to 399 (GLKQYFIAVE…EMPMNVADLI (162 aa)) is the Helicase C-terminal domain.

It belongs to the DEAD box helicase family. DDX48/FAL1 subfamily.

The protein resides in the nucleus. The protein localises to the nucleolus. It catalyses the reaction ATP + H2O = ADP + phosphate + H(+). Functionally, ATP-dependent RNA helicase involved in 40S ribosomal subunit biogenesis. Required for the processing and cleavage of 35S pre-rRNA at sites A0, A1, and A2, leading to mature 18S rRNA. This is ATP-dependent RNA helicase fal-1 (fal-1) from Neurospora crassa (strain ATCC 24698 / 74-OR23-1A / CBS 708.71 / DSM 1257 / FGSC 987).